Reading from the N-terminus, the 479-residue chain is UDP-N-acetylmuramoyl-L-alanyl-D-glutamate--2,6-diaminopimelate ligase (479 aa).

Ser21 is a UDP-N-acetyl-alpha-D-muramoyl-L-alanyl-D-glutamate binding site. 98 to 104 is an ATP binding site; that stretch reads GTNGKSS. UDP-N-acetyl-alpha-D-muramoyl-L-alanyl-D-glutamate is bound by residues 144–145, Ser171, Gln177, and Arg179; that span reads TT. Lys211 carries the post-translational modification N6-carboxylysine. Meso-2,6-diaminopimelate-binding positions include Arg372, 396-399, Gly446, and Glu450; that span reads DNPR. Residues 396–399 carry the Meso-diaminopimelate recognition motif motif; it reads DNPR.

The protein belongs to the MurCDEF family. MurE subfamily. Mg(2+) is required as a cofactor. Post-translationally, carboxylation is probably crucial for Mg(2+) binding and, consequently, for the gamma-phosphate positioning of ATP.

The protein localises to the cytoplasm. It catalyses the reaction UDP-N-acetyl-alpha-D-muramoyl-L-alanyl-D-glutamate + meso-2,6-diaminopimelate + ATP = UDP-N-acetyl-alpha-D-muramoyl-L-alanyl-gamma-D-glutamyl-meso-2,6-diaminopimelate + ADP + phosphate + H(+). The protein operates within cell wall biogenesis; peptidoglycan biosynthesis. In terms of biological role, catalyzes the addition of meso-diaminopimelic acid to the nucleotide precursor UDP-N-acetylmuramoyl-L-alanyl-D-glutamate (UMAG) in the biosynthesis of bacterial cell-wall peptidoglycan. The polypeptide is UDP-N-acetylmuramoyl-L-alanyl-D-glutamate--2,6-diaminopimelate ligase (Rickettsia rickettsii).